Here is a 145-residue protein sequence, read N- to C-terminus: RNA polymerase I-specific transcription initiation factor RRN10 (145 aa).

Component of the UAF (upstream activation factor) complex which consists of UAF30, RRN5, RRN9, RRN10, and histones H3 and H4.

The protein localises to the nucleus. The protein resides in the nucleolus. Functionally, component of the UAF (upstream activation factor) complex which interacts with the upstream element of the RNA polymerase I promoter and forms a stable preinitiation complex. Together with SPT15/TBP UAF seems to stimulate basal transcription to a fully activated level. The polypeptide is RNA polymerase I-specific transcription initiation factor RRN10 (RRN10) (Saccharomyces cerevisiae (strain ATCC 204508 / S288c) (Baker's yeast)).